The sequence spans 191 residues: NAD(P)H-dependent FMN reductase LOT6 (191 aa).

Residues arginine 11, 94–97 (QYNW), and tyrosine 124 each bind FMN.

In terms of assembly, homodimer.

The protein resides in the cytoplasm. Its subcellular location is the nucleus. The enzyme catalyses FMNH2 + NADP(+) = FMN + NADPH + 2 H(+). The catalysed reaction is FMNH2 + NAD(+) = FMN + NADH + 2 H(+). In terms of biological role, has several reductase activities that are NAD(P)H-dependent and involve FMN as a cofactor, ferricyanide being the best substrate for reduction. May be involved in ferric iron assimilation. The sequence is that of NAD(P)H-dependent FMN reductase LOT6 (LOT6) from Saccharomyces cerevisiae (strain ATCC 204508 / S288c) (Baker's yeast).